We begin with the raw amino-acid sequence, 1054 residues long: Isoleucine--tRNA ligase (1054 aa).

The 'HIGH' region signature appears at 58–68 (PFANGLPHYGH). The short motif at 627-631 (KMSKS) is the 'KMSKS' region element. K630 serves as a coordination point for ATP.

This sequence belongs to the class-I aminoacyl-tRNA synthetase family. IleS type 2 subfamily. Monomer. Zn(2+) is required as a cofactor.

The protein localises to the cytoplasm. The catalysed reaction is tRNA(Ile) + L-isoleucine + ATP = L-isoleucyl-tRNA(Ile) + AMP + diphosphate. Catalyzes the attachment of isoleucine to tRNA(Ile). As IleRS can inadvertently accommodate and process structurally similar amino acids such as valine, to avoid such errors it has two additional distinct tRNA(Ile)-dependent editing activities. One activity is designated as 'pretransfer' editing and involves the hydrolysis of activated Val-AMP. The other activity is designated 'posttransfer' editing and involves deacylation of mischarged Val-tRNA(Ile). This is Isoleucine--tRNA ligase from Corynebacterium efficiens (strain DSM 44549 / YS-314 / AJ 12310 / JCM 11189 / NBRC 100395).